The sequence spans 28 residues: FLAKKVAKTVAKQAAKQGAKYVANKHME.

Position 28 is a glutamic acid 1-amide (Glu-28).

Expressed by the venom gland.

Its subcellular location is the secreted. The sequence is that of Short cationic peptide-1b from Cupiennius salei (American wandering spider).